The primary structure comprises 317 residues: Proline iminopeptidase (317 aa).

The AB hydrolase-1 domain occupies 41–296 (VFIHGGPGGG…ELHIVEGAGH (256 aa)). The active-site Nucleophile is Ser-113. Residue Asp-268 is part of the active site. Residue His-296 is the Proton donor of the active site.

The protein belongs to the peptidase S33 family. Monomer.

The protein resides in the cytoplasm. The catalysed reaction is Release of N-terminal proline from a peptide.. Its function is as follows. Specifically catalyzes the removal of N-terminal proline residues from peptides. This chain is Proline iminopeptidase (pip), found in Serratia marcescens.